Here is a 268-residue protein sequence, read N- to C-terminus: Tryptophan synthase alpha chain (268 aa).

Active-site proton acceptor residues include Glu49 and Asp60.

Belongs to the TrpA family. In terms of assembly, tetramer of two alpha and two beta chains.

The enzyme catalyses (1S,2R)-1-C-(indol-3-yl)glycerol 3-phosphate + L-serine = D-glyceraldehyde 3-phosphate + L-tryptophan + H2O. Its pathway is amino-acid biosynthesis; L-tryptophan biosynthesis; L-tryptophan from chorismate: step 5/5. Its function is as follows. The alpha subunit is responsible for the aldol cleavage of indoleglycerol phosphate to indole and glyceraldehyde 3-phosphate. The polypeptide is Tryptophan synthase alpha chain (Citrobacter koseri (strain ATCC BAA-895 / CDC 4225-83 / SGSC4696)).